We begin with the raw amino-acid sequence, 219 residues long: ATP-dependent dethiobiotin synthetase BioD (219 aa).

14–19 is a binding site for ATP; the sequence is DVGKTY. Thr-18 contributes to the Mg(2+) binding site. Residue Lys-37 is part of the active site. Ser-41 contacts substrate. Residues Asp-54, 114-117, and 175-176 each bind ATP; these read EGAG and NN. Mg(2+) is bound by residues Asp-54 and Glu-114.

This sequence belongs to the dethiobiotin synthetase family. As to quaternary structure, homodimer. Mg(2+) serves as cofactor.

It is found in the cytoplasm. It catalyses the reaction (7R,8S)-7,8-diammoniononanoate + CO2 + ATP = (4R,5S)-dethiobiotin + ADP + phosphate + 3 H(+). It participates in cofactor biosynthesis; biotin biosynthesis; biotin from 7,8-diaminononanoate: step 1/2. Its function is as follows. Catalyzes a mechanistically unusual reaction, the ATP-dependent insertion of CO2 between the N7 and N8 nitrogen atoms of 7,8-diaminopelargonic acid (DAPA, also called 7,8-diammoniononanoate) to form a ureido ring. The protein is ATP-dependent dethiobiotin synthetase BioD of Fusobacterium nucleatum subsp. nucleatum (strain ATCC 25586 / DSM 15643 / BCRC 10681 / CIP 101130 / JCM 8532 / KCTC 2640 / LMG 13131 / VPI 4355).